The primary structure comprises 301 residues: Ribosomal protein L11 methyltransferase (301 aa).

Positions 147, 168, 190, and 237 each coordinate S-adenosyl-L-methionine.

Belongs to the methyltransferase superfamily. PrmA family.

The protein localises to the cytoplasm. The catalysed reaction is L-lysyl-[protein] + 3 S-adenosyl-L-methionine = N(6),N(6),N(6)-trimethyl-L-lysyl-[protein] + 3 S-adenosyl-L-homocysteine + 3 H(+). In terms of biological role, methylates ribosomal protein L11. In Synechococcus sp. (strain RCC307), this protein is Ribosomal protein L11 methyltransferase.